A 202-amino-acid polypeptide reads, in one-letter code: Holliday junction branch migration complex subunit RuvA (202 aa).

The segment at 1 to 64 (MIGYLKGQIL…YDGTVLYGFL (64 aa)) is domain I. Positions 65-146 (TKEDKQLWAI…AVTIAGVPKI (82 aa)) are domain II. A flexible linker region spans residues 147–155 (KIEGEAPFM). Residues 155-202 (MSEVMMALTALGYSPMEARKAIDQLYKTGLANDSVENIIRAALRILKK) form a domain III region.

Belongs to the RuvA family. Homotetramer. Forms an RuvA(8)-RuvB(12)-Holliday junction (HJ) complex. HJ DNA is sandwiched between 2 RuvA tetramers; dsDNA enters through RuvA and exits via RuvB. An RuvB hexamer assembles on each DNA strand where it exits the tetramer. Each RuvB hexamer is contacted by two RuvA subunits (via domain III) on 2 adjacent RuvB subunits; this complex drives branch migration. In the full resolvosome a probable DNA-RuvA(4)-RuvB(12)-RuvC(2) complex forms which resolves the HJ.

The protein resides in the cytoplasm. Its function is as follows. The RuvA-RuvB-RuvC complex processes Holliday junction (HJ) DNA during genetic recombination and DNA repair, while the RuvA-RuvB complex plays an important role in the rescue of blocked DNA replication forks via replication fork reversal (RFR). RuvA specifically binds to HJ cruciform DNA, conferring on it an open structure. The RuvB hexamer acts as an ATP-dependent pump, pulling dsDNA into and through the RuvAB complex. HJ branch migration allows RuvC to scan DNA until it finds its consensus sequence, where it cleaves and resolves the cruciform DNA. The polypeptide is Holliday junction branch migration complex subunit RuvA (Elusimicrobium minutum (strain Pei191)).